Consider the following 166-residue polypeptide: NAD(P)H-quinone oxidoreductase subunit I, chloroplastic (166 aa).

4Fe-4S ferredoxin-type domains follow at residues 55 to 84 (GRIHFEFDKCIACEVCVRVCPIDLPVVDWK) and 95 to 124 (LNYSIDFGICIFCGNCVEYCPTNCLSMTEE). [4Fe-4S] cluster contacts are provided by Cys-64, Cys-67, Cys-70, Cys-74, Cys-104, Cys-107, Cys-110, and Cys-114.

It belongs to the complex I 23 kDa subunit family. As to quaternary structure, NDH is composed of at least 16 different subunits, 5 of which are encoded in the nucleus. It depends on [4Fe-4S] cluster as a cofactor.

It is found in the plastid. The protein resides in the chloroplast thylakoid membrane. It carries out the reaction a plastoquinone + NADH + (n+1) H(+)(in) = a plastoquinol + NAD(+) + n H(+)(out). The enzyme catalyses a plastoquinone + NADPH + (n+1) H(+)(in) = a plastoquinol + NADP(+) + n H(+)(out). NDH shuttles electrons from NAD(P)H:plastoquinone, via FMN and iron-sulfur (Fe-S) centers, to quinones in the photosynthetic chain and possibly in a chloroplast respiratory chain. The immediate electron acceptor for the enzyme in this species is believed to be plastoquinone. Couples the redox reaction to proton translocation, and thus conserves the redox energy in a proton gradient. In Polymnia canadensis (White-flowered leaf-cup), this protein is NAD(P)H-quinone oxidoreductase subunit I, chloroplastic.